A 798-amino-acid chain; its full sequence is PR domain zinc finger protein 4 (798 aa).

In terms of domain architecture, SET spans 408 to 525; that stretch reads KQLVLRQSIV…PENELLFYYS (118 aa). 5 consecutive C2H2-type zinc fingers follow at residues 586-608, 614-636, 642-664, 670-692, and 698-720; these read WKCS…FMGH, HKCD…LKIH, YRCT…MVIH, LKCD…VLIH, and IKCP…LNSH. The C2H2-type 6; degenerate zinc finger occupies 726-747; it reads YVCEKCTKAYLTKYHLTRHLKA. The segment at 750-798 is disordered; sequence EPASSSSAQDDEDEDGDSGEDGLPGSMTTEGCRMSSAVYSADESLSAHK. A compositionally biased stretch (acidic residues) spans 758–769; it reads QDDEDEDGDSGE.

Belongs to the class V-like SAM-binding methyltransferase superfamily.

It is found in the nucleus. Functionally, may function as a transcription factor involved in cell differentiation. This chain is PR domain zinc finger protein 4 (Prdm4), found in Rattus norvegicus (Rat).